The following is a 267-amino-acid chain: Thymidylate synthase (267 aa).

Arg24 is a dUMP binding site. His54 provides a ligand contact to (6R)-5,10-methylene-5,6,7,8-tetrahydrofolate. Residue 129-130 coordinates dUMP; that stretch reads RR. Cys149 serves as the catalytic Nucleophile. Residues 169-172, Asn180, and 210-212 each bind dUMP; these read RSAD and HIY. A (6R)-5,10-methylene-5,6,7,8-tetrahydrofolate-binding site is contributed by Asp172. Residue Ala266 participates in (6R)-5,10-methylene-5,6,7,8-tetrahydrofolate binding.

The protein belongs to the thymidylate synthase family. Bacterial-type ThyA subfamily. Homodimer.

It is found in the cytoplasm. It catalyses the reaction dUMP + (6R)-5,10-methylene-5,6,7,8-tetrahydrofolate = 7,8-dihydrofolate + dTMP. The protein operates within pyrimidine metabolism; dTTP biosynthesis. In terms of biological role, catalyzes the reductive methylation of 2'-deoxyuridine-5'-monophosphate (dUMP) to 2'-deoxythymidine-5'-monophosphate (dTMP) while utilizing 5,10-methylenetetrahydrofolate (mTHF) as the methyl donor and reductant in the reaction, yielding dihydrofolate (DHF) as a by-product. This enzymatic reaction provides an intracellular de novo source of dTMP, an essential precursor for DNA biosynthesis. The sequence is that of Thymidylate synthase from Arthrobacter sp. (strain FB24).